Here is a 200-residue protein sequence, read N- to C-terminus: Translation machinery-associated protein 22 (200 aa).

The SUI1 domain maps to 95–166; sequence VVIRREARTK…EVEAYIHSLL (72 aa).

The protein belongs to the DENR family. In terms of assembly, interacts with the 40S ribosomal subunit.

The protein resides in the cytoplasm. This Kluyveromyces lactis (strain ATCC 8585 / CBS 2359 / DSM 70799 / NBRC 1267 / NRRL Y-1140 / WM37) (Yeast) protein is Translation machinery-associated protein 22 (TMA22).